The sequence spans 355 residues: Septin-2B (355 aa).

The 273-residue stretch at 33 to 305 folds into the Septin-type G domain; that stretch reads KGFEFTLMVV…ENFRSERLKK (273 aa). The tract at residues 43 to 50 is G1 motif; that stretch reads GESGLGKS. Residues 43 to 50, Thr-77, Gly-103, 182 to 190, Gly-240, and Arg-255 contribute to the GTP site; these read GESGLGKS and KADTLTLRE. The tract at residues 100–103 is G3 motif; the sequence is DTPG. Positions 181–184 are G4 motif; sequence AKAD. The important for dimerization stretch occupies residues 259-269; sequence WGVVEVENPEH.

The protein belongs to the TRAFAC class TrmE-Era-EngA-EngB-Septin-like GTPase superfamily. Septin GTPase family. Septins polymerize into heterooligomeric protein complexes that form filaments, and associate with cellular membranes, actin filaments and microtubules. GTPase activity is required for filament formation. Can form heterooligomers with other family members and form filaments. Interacts with wdpcp.

Its subcellular location is the cytoplasm. It is found in the cytoskeleton. It localises to the spindle. The protein resides in the cleavage furrow. The protein localises to the midbody. Its subcellular location is the cell cortex. It is found in the cell projection. It localises to the cilium membrane. Its function is as follows. Filament-forming cytoskeletal GTPase. Required for normal organization of the actin cytoskeleton. Plays a role in the biogenesis of polarized columnar-shaped epithelium. Required for the progression through mitosis through regulation of chromosome congression. During anaphase, may be required for chromosome segregation and spindle elongation. Plays a role in ciliogenesis and collective cell movements including convergent extension during gastrulation. In cilia, required for the integrity of the diffusion barrier at the base of the primary cilium that prevents diffusion of transmembrane proteins between the cilia and plasma membranes. Controls cell shape and not polarization of cells during convergent extension. This is Septin-2B (sept2-B) from Xenopus tropicalis (Western clawed frog).